The following is a 384-amino-acid chain: 5-amino-6-(D-ribitylamino)uracil--L-tyrosine 4-hydroxyphenyl transferase 2 (384 aa).

Positions V53–T286 constitute a Radical SAM core domain. [4Fe-4S] cluster-binding residues include C67, C71, and C74.

This sequence belongs to the radical SAM superfamily. CofH family. Consists of two subunits, CofG and CofH. [4Fe-4S] cluster serves as cofactor.

The enzyme catalyses 5-amino-6-(D-ribitylamino)uracil + L-tyrosine + S-adenosyl-L-methionine = 5-amino-5-(4-hydroxybenzyl)-6-(D-ribitylimino)-5,6-dihydrouracil + 2-iminoacetate + 5'-deoxyadenosine + L-methionine + H(+). It participates in cofactor biosynthesis; coenzyme F0 biosynthesis. Functionally, catalyzes the radical-mediated synthesis of 5-amino-5-(4-hydroxybenzyl)-6-(D-ribitylimino)-5,6-dihydrouracil from 5-amino-6-(D-ribitylamino)uracil and L-tyrosine. The sequence is that of 5-amino-6-(D-ribitylamino)uracil--L-tyrosine 4-hydroxyphenyl transferase 2 from Methanosarcina mazei (strain ATCC BAA-159 / DSM 3647 / Goe1 / Go1 / JCM 11833 / OCM 88) (Methanosarcina frisia).